A 198-amino-acid chain; its full sequence is Large ribosomal subunit protein bL27c (198 aa).

A chloroplast-targeting transit peptide spans Met1–Ser58.

Belongs to the bacterial ribosomal protein bL27 family. In terms of assembly, part of the 50S ribosomal subunit.

The protein resides in the plastid. It localises to the chloroplast. This is Large ribosomal subunit protein bL27c (RPL27) from Arabidopsis thaliana (Mouse-ear cress).